A 317-amino-acid chain; its full sequence is Transcription factor EC (317 aa).

Residues 1-90 (MTFDCRVCDQ…GLTDAPCPSI (90 aa)) are necessary for transcriptional transactivation. In terms of domain architecture, bHLH spans 110–163 (QKKDNHNLIERRRRYNINYRIKELGTLIPKSNDPDMRWNKGTILKASVDYIKWL). Residues 242–317 (TSPEFYEQAV…SLSSEDGDEL (76 aa)) are necessary for transcriptional transactivation.

The protein belongs to the MiT/TFE family. In terms of assembly, homodimer. Forms heterodimers with MITF. Interacts with MITF. Forms heterodimers with TFE3. As to expression, expressed in osteoclast-like cells (at protein level). Expressed in cells of the mononuclear phagocyte lineage. Expressed in macrophages and in osteoclast-like cells.

It localises to the nucleus. Its function is as follows. Transcriptional regulator that acts as a repressor or an activator. Acts as a transcriptional transactivator on the proximal promoter region of the tartrate-resistant acid phosphatase (TRAP) E-box containing promoter. Collaborates with MITF in target gene activation. Acts as a transcriptional repressor on minimal promoter containing element F (that includes an E-box sequence). Binds to element F in an E-box sequence-specific manner. Acts as a transcriptional repressor on minimal promoter containing mu E3 enhancer sequence. Binds to mu E3 DNA sequence of the immunoglobulin heavy-chain gene enhancer. Binds DNA in a homo- or heterodimeric form. The sequence is that of Transcription factor EC (Tfec) from Mus musculus (Mouse).